The sequence spans 498 residues: ATP synthase subunit beta, chloroplastic (498 aa).

172–179 (GGAGVGKT) contributes to the ATP binding site.

This sequence belongs to the ATPase alpha/beta chains family. In terms of assembly, F-type ATPases have 2 components, CF(1) - the catalytic core - and CF(0) - the membrane proton channel. CF(1) has five subunits: alpha(3), beta(3), gamma(1), delta(1), epsilon(1). CF(0) has four main subunits: a(1), b(1), b'(1) and c(9-12).

Its subcellular location is the plastid. The protein resides in the chloroplast thylakoid membrane. It catalyses the reaction ATP + H2O + 4 H(+)(in) = ADP + phosphate + 5 H(+)(out). In terms of biological role, produces ATP from ADP in the presence of a proton gradient across the membrane. The catalytic sites are hosted primarily by the beta subunits. This Gossypium hirsutum (Upland cotton) protein is ATP synthase subunit beta, chloroplastic.